Reading from the N-terminus, the 677-residue chain is Secretogranin-1 (677 aa).

An N-terminal signal peptide occupies residues 1-20; the sequence is MQPTLLLSLLGAVGLAAVNS. Cys36 and Cys57 are oxidised to a cystine. Basic and acidic residues-rich tracts occupy residues 64 to 100 and 118 to 136; these read SRKD…ESSS and ADTE…RADE. A disordered region spans residues 64 to 463; sequence SRKDVKDKET…DKARRHPQGA (400 aa). Thr79 carries the post-translational modification Phosphothreonine. Residues Ser93, Ser99, and Ser100 each carry the phosphoserine modification. O-linked (Xyl...) (chondroitin sulfate) serine glycosylation occurs at Ser93. The tract at residues 116–120 is O-glycosylated at one site; it reads TKADT. Ser130 carries the phosphoserine; by FAM20C modification. Residue Ser149 is modified to Phosphoserine. Composition is skewed to basic and acidic residues over residues 150 to 162, 172 to 190, and 200 to 236; these read EEVK…KSQR, NYQK…HLEE, and NERK…EKSS. A Phosphoserine modification is found at Ser183. Position 225 is a phosphoserine; by FAM20C (Ser225). The O-linked (Xyl...) (chondroitin sulfate) serine glycan is linked to Ser239. 2 positions are modified to phosphoserine: Ser259 and Ser263. The segment covering 262-272 has biased composition (acidic residues); that stretch reads ESEEGEEDATS. The span at 277–287 shows a compositional bias: basic residues; it reads RRTRPRHHHGR. 4 positions are modified to phosphoserine: Ser293, Ser294, Ser311, and Ser335. Tyr341 is subject to Sulfotyrosine. Residues 359-372 are compositionally biased toward basic and acidic residues; sequence WERYRGRGSEEYRA. Ser367, Ser377, and Ser380 each carry phosphoserine; by FAM20C. 2 stretches are compositionally biased toward basic and acidic residues: residues 384 to 415 and 433 to 455; these read EDKR…EPGK and DTRE…QMDK. Tyr401 bears the Phosphotyrosine mark. Ser405 is subject to Phosphoserine. Position 474 is a sulfotyrosine (Tyr474). The tract at residues 475-512 is disordered; the sequence is GEEGAPGKWQQQGDLQDTKENREEARFQDKQYSSHHTA. Positions 490–503 are enriched in basic and acidic residues; it reads QDTKENREEARFQD. Phosphoserine occurs at positions 533 and 534. Tyr566 carries the sulfotyrosine modification. Ser617 carries the phosphoserine modification. A disordered region spans residues 622-653; the sequence is DFYDSEEPVSTHQEAENEKDRADQTVLTEDEK. The residue at position 624 (Tyr624) is a Sulfotyrosine. Ser626 and Ser631 each carry phosphoserine. A compositionally biased stretch (basic and acidic residues) spans 634–653; it reads QEAENEKDRADQTVLTEDEK.

It belongs to the chromogranin/secretogranin protein family. In terms of assembly, interacts with ITPR1 in the secretory granules. In terms of processing, extensively processed by limited proteolysis at conserved basic residues. Alternative processing are seen in different tissues. O-glycosylated. In terms of tissue distribution, detected in cerebrospinal fluid and urine (at protein level). Expressed in the adrenal medulla, and in pheochromocytoma. Not expressed in liver.

Its subcellular location is the secreted. In terms of biological role, secretogranin-1 is a neuroendocrine secretory granule protein, which may be the precursor for other biologically active peptides. The sequence is that of Secretogranin-1 (CHGB) from Homo sapiens (Human).